The following is a 119-amino-acid chain: Protein sigma-1-small (119 aa).

The protein belongs to the orthoreovirus sigma-1s protein family.

In Mammalia (T1L), this protein is Protein sigma-1-small (S1).